A 245-amino-acid chain; its full sequence is Carbohydrate deacetylase (245 aa).

Mg(2+)-binding residues include histidine 59 and histidine 121.

Belongs to the YdjC deacetylase family. Homodimer. Mg(2+) serves as cofactor.

Its function is as follows. Probably catalyzes the deacetylation of acetylated carbohydrates an important step in the degradation of oligosaccharides. The polypeptide is Carbohydrate deacetylase (Clostridium beijerinckii (strain ATCC 51743 / NCIMB 8052) (Clostridium acetobutylicum)).